The chain runs to 1235 residues: ATP-dependent helicase/nuclease subunit A (1235 aa).

The UvrD-like helicase ATP-binding domain maps to 12–482; sequence ALWTDDQWKA…IDLSQNFRSR (471 aa). ATP is bound at residue 33–40; that stretch reads AAAGSGKT. A UvrD-like helicase C-terminal domain is found at 509-800; it reads AAELTLGASF…RMMTIHASKG (292 aa).

This sequence belongs to the helicase family. AddA subfamily. In terms of assembly, heterodimer of AddA and AddB/RexB. Mg(2+) serves as cofactor.

The enzyme catalyses Couples ATP hydrolysis with the unwinding of duplex DNA by translocating in the 3'-5' direction.. The catalysed reaction is ATP + H2O = ADP + phosphate + H(+). The heterodimer acts as both an ATP-dependent DNA helicase and an ATP-dependent, dual-direction single-stranded exonuclease. Recognizes the chi site generating a DNA molecule suitable for the initiation of homologous recombination. The AddA nuclease domain is required for chi fragment generation; this subunit has the helicase and 3' -&gt; 5' nuclease activities. The polypeptide is ATP-dependent helicase/nuclease subunit A (Listeria innocua serovar 6a (strain ATCC BAA-680 / CLIP 11262)).